The sequence spans 138 residues: MSQSTAYIILNILVILAGCFITACGIYLFVNGLFHSIIGFVLGIYYLLAGVCIVLLEIVFPQKLVNLFGFYTYWFGKGALISLIGLLILGNSGFFLAAGIIVIAVGIVCMIFHFLLGCPRPLINRSVERKPEPQGQHA.

4 helical membrane-spanning segments follow: residues 12–30 (ILVI…YLFV), 32–56 (GLFH…IVLL), 71–90 (YTYW…LILG), and 93–118 (GFFL…LLGC).

The protein resides in the membrane. The polypeptide is Membrane protein P8A7 (pmpA) (Dictyostelium discoideum (Social amoeba)).